We begin with the raw amino-acid sequence, 355 residues long: Heat-inducible transcription repressor HrcA (355 aa).

The protein belongs to the HrcA family.

In terms of biological role, negative regulator of class I heat shock genes (grpE-dnaK-dnaJ and groELS operons). Prevents heat-shock induction of these operons. The sequence is that of Heat-inducible transcription repressor HrcA from Nitratidesulfovibrio vulgaris (strain ATCC 29579 / DSM 644 / CCUG 34227 / NCIMB 8303 / VKM B-1760 / Hildenborough) (Desulfovibrio vulgaris).